A 683-amino-acid chain; its full sequence is ATP-dependent zinc metalloprotease FtsH 2 (683 aa).

Over residues 1 to 12 (MADQTSQNDNQN) the composition is skewed to polar residues. The tract at residues 1 to 21 (MADQTSQNDNQNGSGLPGGGP) is disordered. Residues 1–28 (MADQTSQNDNQNGSGLPGGGPSGTGRGR) lie on the Cytoplasmic side of the membrane. The chain crosses the membrane as a helical span at residues 29-49 (LIIWVIAGTLLALWAYSYWGM). At 50-136 (GASGGERISY…VTKPESSFPW (87 aa)) the chain is on the periplasmic side. A helical transmembrane segment spans residues 137-157 (GLVIMGLLPVLLLFGVGYIFL). The Cytoplasmic portion of the chain corresponds to 158–683 (RRMQSQGQGL…ASGSADASGS (526 aa)). Residue 228–235 (GPPGTGKT) participates in ATP binding. H450 contributes to the Zn(2+) binding site. The active site involves E451. Residues H454 and D526 each contribute to the Zn(2+) site. Residues 627 to 683 (VNGDTDEIGHMPTTNGAAASEENGSADDHEPDEATVIEEDGESGEGRASGSADASGS) form a disordered region. Over residues 655–669 (HEPDEATVIEEDGES) the composition is skewed to acidic residues. Over residues 672 to 683 (GRASGSADASGS) the composition is skewed to low complexity.

In the central section; belongs to the AAA ATPase family. The protein in the C-terminal section; belongs to the peptidase M41 family. As to quaternary structure, homohexamer. The cofactor is Zn(2+).

Its subcellular location is the cell inner membrane. In terms of biological role, acts as a processive, ATP-dependent zinc metallopeptidase for both cytoplasmic and membrane proteins. Plays a role in the quality control of integral membrane proteins. The protein is ATP-dependent zinc metalloprotease FtsH 2 of Salinibacter ruber (strain M8).